The primary structure comprises 1201 residues: Coatomer subunit alpha (1201 aa).

WD repeat units lie at residues 9–39 (SKSTRAKGIAFHPSRPWVLVALFSSTIQLWD), 51–81 (DHEGPVRGLDFHPTQPIFVSAGDDYTIKVWS), 93–123 (GHLDYVRTVFFHRELPWIISASDDQTIRIWN), 135–165 (GHNHFVMCAQFHPTDDLIVSASLDETIRIWD), 207–237 (GHTRGVNWASFHPTLPLIVSGSDDRQVKLWR), and 251–281 (GHTNNVDSVIFHPHQNLIISVGEDKTLRVWD). The disordered stretch occupies residues 842–862 (AVNTTQEQEEPLGEENFNDED). Residues 848–862 (EQEEPLGEENFNDED) show a composition bias toward acidic residues.

In terms of assembly, oligomeric complex that consists of at least the alpha, beta, beta', gamma, delta, epsilon and zeta subunits. Interacts with the ESCRT-0 subunit VPS27. Interacts with KEI1 (via C-terminal region).

The protein resides in the cytoplasm. Its subcellular location is the golgi apparatus membrane. It localises to the cytoplasmic vesicle. The protein localises to the COPI-coated vesicle membrane. Its function is as follows. The coatomer is a cytosolic protein complex that binds to dilysine motifs and reversibly associates with Golgi non-clathrin-coated vesicles, which further mediate biosynthetic protein transport from the ER, via the Golgi up to the trans Golgi network. Coatomer complex is required for budding from Golgi membranes, and is essential for the retrograde Golgi-to-ER transport of dilysine-tagged proteins. In Saccharomyces cerevisiae (strain ATCC 204508 / S288c) (Baker's yeast), this protein is Coatomer subunit alpha (COP1).